Here is a 555-residue protein sequence, read N- to C-terminus: Capsid vertex component 2 (555 aa).

The interaction with major capsid protein/MCP stretch occupies residues 1–47 (MAQCNLFYQYPITPILEGHVRNILICTEEDIRRLQSQSSLRLREKID).

It belongs to the herpesviridae CVC2 protein family. Heterodimerizes with CVC1. Interacts with major capsid protein/MCP and triplex capsid protein 1/TRX1 at the pentamer vertices. Interacts with the large tegument protein/LTP.

The protein resides in the virion. The protein localises to the host nucleus. Functionally, capsid vertex-specific component that plays a role during viral DNA encapsidation, assuring correct genome cleavage and presumably stabilizing capsids that contain full-length viral genomes. Participates in the interaction between the capsid and the tegument through interaction with the large tegument protein/LTP. This is Capsid vertex component 2 from Homo sapiens (Human).